A 425-amino-acid chain; its full sequence is MSTPTRTKKLIVSPTSVRKRVQNQNLTNTTYSTNSNSSRYRDSEENFLNRQQQELKQLHDQQLYELQELQEQQINEIEELSKQRSNTRIRNVFKVLITILVGSIIYGTYTNQFQPNPIEPFHLTEPIGQTWLHSLKDISTNWYHIWSDSFKDLARIKPLSESQTMPAGHRLHEKQILEKTLRRHQQEQDNNNNNKKTIENQMERMKRTDLERAIKEKTFFLDPTHYVNEEMIKQEIERQLKPHPGAPTPYNKDVYNSQNIYYPSSDAIPMVREKIENLENKVLDSVDEAIYKFGQKSKELLHNIQEKKEQIKEKLNDEPSNIEKEFNSLIKEIEKANYNIFKDLKDNYGEPTIEKLNELRYKFNDAARESREVIKNKIESAQAIEQELAKNLKKPHADSNGHPKPYPHHHLLNQENQIDENLIIV.

Asn25, Asn28, and Asn36 each carry an N-linked (GlcNAc...) asparagine glycan. 3 coiled-coil regions span residues 41–91, 172–208, and 292–340; these read RDSE…RIRN, HEKQ…MKRT, and KFGQ…NYNI. Residues 91–113 form a helical membrane-spanning segment; sequence NVFKVLITILVGSIIYGTYTNQF. The segment at 393 to 413 is disordered; it reads KKPHADSNGHPKPYPHHHLLN.

Its subcellular location is the membrane. The chain is SrfA-induced gene G protein (sigG) from Dictyostelium discoideum (Social amoeba).